Here is a 9518-residue protein sequence, read N- to C-terminus: Nonribosomal peptide synthetase ungA' (9518 aa).

The segment at 214–611 is adenylation 1; the sequence is ERARETPNAP…ARKDDQVKVR (398 aa). The 77-residue stretch at 738-814 folds into the Carrier 1 domain; sequence APRTEMEWRL…DLAEVARLEQ (77 aa). At S775 the chain carries O-(pantetheine 4'-phosphoryl)serine. Residues 853 to 1250 are condensation 1; sequence DLLPCSPLQE…EEVLRQISRE (398 aa). The segment at 1292-1695 is adenylation 2; sequence QRVQEQPDRP…GRKDTQVKIR (404 aa). Positions 1822 to 1898 constitute a Carrier 2 domain; the sequence is LPQTELERRL…RLAHCSQTEQ (77 aa). The residue at position 1859 (S1859) is an O-(pantetheine 4'-phosphoryl)serine. An epimerization 1 region spans residues 1911–2336; sequence TFALSPIQQL…QRSLEVVAKE (426 aa). The interval 2376–2803 is condensation 2; sequence EDIYPCSPVQ…DNLQIASSQD (428 aa). The tract at residues 2829 to 3224 is adenylation 3; the sequence is RIQQQPEAPA…NRKDNQVKIR (396 aa). Residues 3352–3428 form the Carrier 3 domain; that stretch reads APATASEQRL…DMAQTLKVES (77 aa). S3389 carries the O-(pantetheine 4'-phosphoryl)serine modification. Residues 3465-3869 are condensation 3; it reads EDVLPCTPLQ…QVCKEASQYL (405 aa). The segment at 3906 to 4307 is adenylation 4; sequence QQAHQRPNAS…GRRDAQVKIR (402 aa). Residues 4436-4512 enclose the Carrier 4 domain; the sequence is TPTTITECRI…RLAACTTPVD (77 aa). Position 4473 is an O-(pantetheine 4'-phosphoryl)serine (S4473). The interval 4527 to 4954 is epimerization 2; sequence ALSPIQQLFV…EDAAQELPSL (428 aa). The interval 4990–5411 is condensation 4; it reads VEDIYPCSPI…ANLISKEDLR (422 aa). Residues 5433–5829 form an adenylation 5 region; sequence SEQAQNQPDA…GRKDGQVKIR (397 aa). A Carrier 5 domain is found at 5957–6033; it reads VASSPVELAL…QLAKNSGLQA (77 aa). S5994 carries the O-(pantetheine 4'-phosphoryl)serine modification. Residues 6050 to 6470 form an epimerization 3 region; the sequence is ELSPIQRMFF…CEHSLVMAAH (421 aa). The tract at residues 6512–6856 is condensation 5; it reads VEDIYPCTPI…TGISVQNNAS (345 aa). An adenylation 6 region spans residues 6947-7338; sequence LRPNSSAIHA…GRKDSQVKVR (392 aa). Residues 7464–7540 enclose the Carrier 6 domain; it reads LPRTEVEMQL…GLAPSAASQA (77 aa). S7501 is modified (O-(pantetheine 4'-phosphoryl)serine). Positions 7555–7978 are epimerization 4; it reads ELSPIQQMFI…LQTAARELPH (424 aa). The interval 8016–8444 is condensation 6; that stretch reads VEDIYPLTPI…QVDLAGRHDQ (429 aa). Residues 8468–8867 are adenylation 7; the sequence is MQCQQRPDAT…SRKDAQVKIR (400 aa). Residues 8995–9071 form the Carrier 7 domain; that stretch reads PLTTEMEWRL…DMAHYLREGQ (77 aa). O-(pantetheine 4'-phosphoryl)serine is present on S9032. Positions 9111 to 9454 are condensation 7; that stretch reads DVYPTTELQD…DNLEHDAGTS (344 aa).

It belongs to the NRP synthetase family.

It functions in the pathway secondary metabolite biosynthesis. Functionally, nonribosomal peptide synthetase; part of the gene cluster that mediates the biosynthesis of the unguisins, gamma-aminobutyric acid (GABA)-containing fungal cyclic heptapeptides with the amino acid sequence cyclo-(D-Ala1-D-Val2-L-Leu3-beta-MePhe4-D-Ala5-D-Trp6-GABA7) for unguisin H and cyclo-(D-Ala1-D-Ala2-L-Leu3-beta-MePhe4-D-Ala5-D-Trp6-GABA7) for unguisin I. UngA' is the main enzyme within the cluster which condenses the 7 residues using its respective 7 modules. The terminal condensation domain (Ct) is involved in cyclization with D-alanine and thereby releasing of unguisins H and I. The alanine racemase ungC' provides D-alanine, which is then accepted by the first adenylation domain of ungA', whereas the methyltransferase ungE' provides the (2R,3R)-beta-methylphenylalanine residue incorporated by the module 4. Finally, the hydrolase ungD' catalyzes the hydrolysis between the D-tryptophan and GABA residues of unguisins H and I to produce the corresponding linear peptides. In Aspergillus campestris (strain IBT 28561), this protein is Nonribosomal peptide synthetase ungA'.